The following is a 114-amino-acid chain: RHSDPARRGELSVCDSISEWVTAADKKTAVDMSGGTVTVLEKVPVSKGQLKQYFYETKCNPMGYTKEGCRGIDKRHWNSQCRTTQSYVRALTMDSKKRIGWRFIRIDTSCVCTL.

Intrachain disulfides connect Cys-14–Cys-81, Cys-59–Cys-110, and Cys-69–Cys-112.

It belongs to the NGF-beta family. Monomers and homodimers. Binds to NTRK2/TRKB. Can form heterodimers with other neurotrophin family members, such as NTF3 and NTF4 (in vitro), but the physiological relevance of this is not clear. BDNF precursor form: interacts with the heterodimer formed by NGFR and SORCS2. Mature BDNF has much lower affinity for the heterodimer formed by NGFR and SORCS2. N-glycosylated and glycosulfated, contrary to mature BDNF. In terms of processing, mature BDNF is produced by proteolytic removal of the propeptide, catalyzed by a FURIN family member. In addition, the precursor form is proteolytically cleaved within the propeptide, but this is not an obligatory intermediate for the production of mature BDNF. Can be converted into mature BDNF by plasmin (PLG).

It localises to the secreted. Important signaling molecule that activates signaling cascades downstream of NTRK2. During development, promotes the survival and differentiation of selected neuronal populations of the peripheral and central nervous systems. Participates in axonal growth, pathfinding and in the modulation of dendritic growth and morphology. Major regulator of synaptic transmission and plasticity at adult synapses in many regions of the CNS. The versatility of BDNF is emphasized by its contribution to a range of adaptive neuronal responses including long-term potentiation (LTP), long-term depression (LTD), certain forms of short-term synaptic plasticity, as well as homeostatic regulation of intrinsic neuronal excitability. In terms of biological role, important signaling molecule that activates signaling cascades downstream of NTRK2. Activates signaling cascades via the heterodimeric receptor formed by NGFR and SORCS2. Signaling via NGFR and SORCS2 plays a role in synaptic plasticity and long-term depression (LTD). Binding to NGFR and SORCS2 promotes neuronal apoptosis. Promotes neuronal growth cone collapse. This is Neurotrophic factor BDNF precursor form (BDNF) from Macaca mulatta (Rhesus macaque).